The following is a 397-amino-acid chain: Acetate kinase (397 aa).

Residue asparagine 7 coordinates Mg(2+). ATP is bound at residue lysine 14. Arginine 88 contributes to the substrate binding site. The Proton donor/acceptor role is filled by aspartate 145. ATP is bound by residues 205 to 209 (HLGNG), 279 to 281 (DMR), and 326 to 330 (GIGEN). Glutamate 380 serves as a coordination point for Mg(2+).

Belongs to the acetokinase family. In terms of assembly, homodimer. Requires Mg(2+) as cofactor. Mn(2+) serves as cofactor.

The protein localises to the cytoplasm. It carries out the reaction acetate + ATP = acetyl phosphate + ADP. It functions in the pathway metabolic intermediate biosynthesis; acetyl-CoA biosynthesis; acetyl-CoA from acetate: step 1/2. Functionally, catalyzes the formation of acetyl phosphate from acetate and ATP. Can also catalyze the reverse reaction. The chain is Acetate kinase from Campylobacter concisus (strain 13826).